The primary structure comprises 81 residues: Large ribosomal subunit protein bL31B (81 aa).

The protein belongs to the bacterial ribosomal protein bL31 family. Type B subfamily. Part of the 50S ribosomal subunit.

The polypeptide is Large ribosomal subunit protein bL31B (Lactococcus lactis subsp. lactis (strain IL1403) (Streptococcus lactis)).